A 739-amino-acid chain; its full sequence is Catalase-peroxidase (739 aa).

Residues 1 to 23 (MLKKIVTALGMSGMLLAANSAIA) form the signal peptide. Residues 100–221 (WHDAGTYRLA…YAATQMGLIY (122 aa)) constitute a cross-link (tryptophyl-tyrosyl-methioninium (Trp-Tyr) (with M-247)). His-101 functions as the Proton acceptor in the catalytic mechanism. The segment at residues 221-247 (YVNPEGPDGKPDIKGAASEIRQAFRAM) is a cross-link (tryptophyl-tyrosyl-methioninium (Tyr-Met) (with W-100)). Residue His-262 coordinates heme b.

This sequence belongs to the peroxidase family. Peroxidase/catalase subfamily. In terms of assembly, homodimer or homotetramer. Heme b serves as cofactor. In terms of processing, formation of the three residue Trp-Tyr-Met cross-link is important for the catalase, but not the peroxidase activity of the enzyme.

The enzyme catalyses H2O2 + AH2 = A + 2 H2O. It carries out the reaction 2 H2O2 = O2 + 2 H2O. Its function is as follows. Bifunctional enzyme with both catalase and broad-spectrum peroxidase activity. This Francisella philomiragia subsp. philomiragia (strain ATCC 25017 / CCUG 19701 / FSC 153 / O#319-036) protein is Catalase-peroxidase.